The primary structure comprises 315 residues: Protoheme IX farnesyltransferase (315 aa).

The next 9 membrane-spanning stretches (helical) occupy residues Val34 to Asn54, Pro55 to Ile75, Ala105 to Asn125, Leu127 to Leu147, Ile155 to Gly175, Leu177 to Trp197, Trp226 to His246, Leu251 to Leu271, and Tyr294 to Met314.

This sequence belongs to the UbiA prenyltransferase family. Protoheme IX farnesyltransferase subfamily.

Its subcellular location is the cell inner membrane. It catalyses the reaction heme b + (2E,6E)-farnesyl diphosphate + H2O = Fe(II)-heme o + diphosphate. It functions in the pathway porphyrin-containing compound metabolism; heme O biosynthesis; heme O from protoheme: step 1/1. Functionally, converts heme B (protoheme IX) to heme O by substitution of the vinyl group on carbon 2 of heme B porphyrin ring with a hydroxyethyl farnesyl side group. This chain is Protoheme IX farnesyltransferase, found in Gluconacetobacter diazotrophicus (strain ATCC 49037 / DSM 5601 / CCUG 37298 / CIP 103539 / LMG 7603 / PAl5).